Consider the following 238-residue polypeptide: Orotidine 5'-phosphate decarboxylase (238 aa).

Substrate-binding positions include D10, K32, 59–68 (DLKLHDIPNT), T122, R184, Q193, G213, and R214. K61 serves as the catalytic Proton donor.

Belongs to the OMP decarboxylase family. Type 1 subfamily. Homodimer.

The enzyme catalyses orotidine 5'-phosphate + H(+) = UMP + CO2. Its pathway is pyrimidine metabolism; UMP biosynthesis via de novo pathway; UMP from orotate: step 2/2. Functionally, catalyzes the decarboxylation of orotidine 5'-monophosphate (OMP) to uridine 5'-monophosphate (UMP). This is Orotidine 5'-phosphate decarboxylase from Bacillus cereus (strain G9842).